A 561-amino-acid chain; its full sequence is Nucleoprotein (561 aa).

Positions 52-237 (VRKDKRTDSD…ISHEPSALNI (186 aa)) are binding site for the cap structure m7GTP. The segment at 336–355 (SKPSAIQPPVRNGGSPDLKQ) is disordered. Mn(2+) is bound by residues Asp380 and Glu382. Residues Glu390, Cys497, His500, and Cys521 each coordinate Zn(2+). Asp525 contributes to the Mn(2+) binding site.

Belongs to the arenaviridae nucleocapsid protein family. Homomultimerizes to form the nucleocapsid. Binds to viral genomic RNA. Interacts with glycoprotein G2. Interacts with protein Z; this interaction probably directs the encapsidated genome to budding sites. Interacts with protein L; this interaction does not interfere with Z-L interaction. Interacts with host IKBKE (via Protein kinase domain); the interaction inhibits IKBKE kinase activity.

The protein localises to the virion. Its subcellular location is the host cytoplasm. Functionally, encapsidates the genome, protecting it from nucleases. The encapsidated genomic RNA is termed the nucleocapsid (NC). Serves as template for viral transcription and replication. The increased presence of protein N in host cell does not seem to trigger the switch from transcription to replication as observed in other negative strain RNA viruses. Through the interaction with host IKBKE, strongly inhibits the phosphorylation and nuclear translocation of host IRF3, a protein involved in interferon activation pathway, leading to the inhibition of interferon-beta and IRF3-dependent promoters activation. Also encodes a functional 3'-5' exoribonuclease that degrades preferentially dsRNA substrates and thereby participates in the suppression of interferon induction. This chain is Nucleoprotein, found in Cavia cutleri (Guinea pig).